The following is a 101-amino-acid chain: ATP synthase subunit c (101 aa).

2 consecutive transmembrane segments (helical) span residues 35–55 and 81–101; these read IGAGLASVGILGTGVGQGLIG and GISESGAIYSLVIAILLIFVV.

This sequence belongs to the ATPase C chain family. As to quaternary structure, F-type ATPases have 2 components, F(1) - the catalytic core - and F(0) - the membrane proton channel. F(1) has five subunits: alpha(3), beta(3), gamma(1), delta(1), epsilon(1). F(0) has three main subunits: a(1), b(2) and c(10-14). The alpha and beta chains form an alternating ring which encloses part of the gamma chain. F(1) is attached to F(0) by a central stalk formed by the gamma and epsilon chains, while a peripheral stalk is formed by the delta and b chains.

Its subcellular location is the cell membrane. Functionally, f(1)F(0) ATP synthase produces ATP from ADP in the presence of a proton or sodium gradient. F-type ATPases consist of two structural domains, F(1) containing the extramembraneous catalytic core and F(0) containing the membrane proton channel, linked together by a central stalk and a peripheral stalk. During catalysis, ATP synthesis in the catalytic domain of F(1) is coupled via a rotary mechanism of the central stalk subunits to proton translocation. In terms of biological role, key component of the F(0) channel; it plays a direct role in translocation across the membrane. A homomeric c-ring of between 10-14 subunits forms the central stalk rotor element with the F(1) delta and epsilon subunits. This chain is ATP synthase subunit c, found in Mycoplasma capricolum subsp. capricolum (strain California kid / ATCC 27343 / NCTC 10154).